We begin with the raw amino-acid sequence, 93 residues long: Stromal cell-derived factor 1 (93 aa).

The N-terminal stretch at Met1 to Gly21 is a signal peptide. A Receptor activation motif motif is present at residues Lys22 to Pro23. A receptor and heparin binding region spans residues Arg29–Arg33. 2 disulfide bridges follow: Cys30-Cys55 and Cys32-Cys71. Receptor binding stretches follow at residues Ile39–Arg41, Lys48–Leu50, and Val60–Val70. Heparin-binding positions include Arg41–Asn51, Arg62, Gln69, and Lys85.

The protein belongs to the intercrine alpha (chemokine CxC) family. In terms of assembly, monomer or homodimer; in equilibrium. Dimer formation is induced by non acidic pH and the presence of multivalent anions, and by binding to CXCR4 or heparin. Monomeric form is required for full chemotactic activity and resistance to ischemia/reperfusion injury, whereas the dimeric form acts as a partial agonist of CXCR4, stimulating Ca2+ mobilization but with no chemotactic activity and instead acts as a selective antagonist that blocks chemotaxis induced by the monomeric form. Interacts with the N-terminus of ACKR3. Interacts with integrin subunit ITGB3 (via the allosteric site (site 2)). Interacts with TNFAIP6 (via Link domain). Highest expression levels detected in kidney, liver, spleen and muscle. Isoform Alpha is expressed ubiquitously but at varying levels, while isoform Beta displays tissue-specific expression, with expression detected in kidney, liver, heart, spleen and muscle but not in lung, colon, brain, skin and stomach.

It is found in the secreted. Chemoattractant active on T-lymphocytes and monocytes but not neutrophils. Activates the C-X-C chemokine receptor CXCR4 to induce a rapid and transient rise in the level of intracellular calcium ions and chemotaxis. Also binds to atypical chemokine receptor ACKR3, which activates the beta-arrestin pathway and acts as a scavenger receptor for SDF-1. Binds to the allosteric site (site 2) of integrins and activates integrins ITGAV:ITGB3, ITGA4:ITGB1 and ITGA5:ITGB1 in a CXCR4-independent manner. Acts as a positive regulator of monocyte migration and a negative regulator of monocyte adhesion via the LYN kinase. Stimulates migration of monocytes and T-lymphocytes through its receptors, CXCR4 and ACKR3, and decreases monocyte adherence to surfaces coated with ICAM-1, a ligand for beta-2 integrins. SDF1A/CXCR4 signaling axis inhibits beta-2 integrin LFA-1 mediated adhesion of monocytes to ICAM-1 through LYN kinase. Plays a protective role after myocardial infarction. Induces down-regulation and internalization of ACKR3 expressed in various cells. Has several critical functions during embryonic development; required for B-cell lymphopoiesis, myelopoiesis in bone marrow and heart ventricular septum formation. Stimulates the proliferation of bone marrow-derived B-cell progenitors in the presence of IL7 as well as growth of stromal cell-dependent pre-B-cells. The sequence is that of Stromal cell-derived factor 1 (Cxcl12) from Mus musculus (Mouse).